The primary structure comprises 349 residues: Anthranilate phosphoribosyltransferase (349 aa).

5-phospho-alpha-D-ribose 1-diphosphate is bound by residues Gly-82, 85-86, 92-95, 110-118, and Ser-122; these read GD, NVST, and KHGNRAVSG. Gly-82 serves as a coordination point for anthranilate. Ser-94 is a binding site for Mg(2+). Asn-113 is an anthranilate binding site. Residue Arg-168 coordinates anthranilate. Asp-227 and Glu-228 together coordinate Mg(2+).

It belongs to the anthranilate phosphoribosyltransferase family. In terms of assembly, homodimer. The cofactor is Mg(2+).

It catalyses the reaction N-(5-phospho-beta-D-ribosyl)anthranilate + diphosphate = 5-phospho-alpha-D-ribose 1-diphosphate + anthranilate. The protein operates within amino-acid biosynthesis; L-tryptophan biosynthesis; L-tryptophan from chorismate: step 2/5. In terms of biological role, catalyzes the transfer of the phosphoribosyl group of 5-phosphorylribose-1-pyrophosphate (PRPP) to anthranilate to yield N-(5'-phosphoribosyl)-anthranilate (PRA). This chain is Anthranilate phosphoribosyltransferase, found in Pseudomonas putida (Arthrobacter siderocapsulatus).